The following is a 114-amino-acid chain: Ribosome-binding factor A (114 aa).

It belongs to the RbfA family. As to quaternary structure, monomer. Binds 30S ribosomal subunits, but not 50S ribosomal subunits or 70S ribosomes.

Its subcellular location is the cytoplasm. In terms of biological role, one of several proteins that assist in the late maturation steps of the functional core of the 30S ribosomal subunit. Associates with free 30S ribosomal subunits (but not with 30S subunits that are part of 70S ribosomes or polysomes). Required for efficient processing of 16S rRNA. May interact with the 5'-terminal helix region of 16S rRNA. This is Ribosome-binding factor A from Staphylococcus saprophyticus subsp. saprophyticus (strain ATCC 15305 / DSM 20229 / NCIMB 8711 / NCTC 7292 / S-41).